We begin with the raw amino-acid sequence, 101 residues long: NAD(P)H-quinone oxidoreductase subunit 4L, chloroplastic (101 aa).

Helical transmembrane passes span Met2–Ile22, Met32–Phe52, and Ile61–Val81.

This sequence belongs to the complex I subunit 4L family. In terms of assembly, NDH is composed of at least 16 different subunits, 5 of which are encoded in the nucleus.

The protein resides in the plastid. Its subcellular location is the chloroplast thylakoid membrane. The catalysed reaction is a plastoquinone + NADH + (n+1) H(+)(in) = a plastoquinol + NAD(+) + n H(+)(out). The enzyme catalyses a plastoquinone + NADPH + (n+1) H(+)(in) = a plastoquinol + NADP(+) + n H(+)(out). NDH shuttles electrons from NAD(P)H:plastoquinone, via FMN and iron-sulfur (Fe-S) centers, to quinones in the photosynthetic chain and possibly in a chloroplast respiratory chain. The immediate electron acceptor for the enzyme in this species is believed to be plastoquinone. Couples the redox reaction to proton translocation, and thus conserves the redox energy in a proton gradient. The protein is NAD(P)H-quinone oxidoreductase subunit 4L, chloroplastic of Populus trichocarpa (Western balsam poplar).